A 402-amino-acid polypeptide reads, in one-letter code: MDAATTRVGLTDLTFRLLRESFADAVSWVAKNLPARPAVPVLSGVLLTGSDNGLTISGFDYEVSAEAQVGAEIVSPGSVLVSGRLLSDITRALPNKPVGVHVEGNRVALTCGNARFSLPTMPVEDYPTLPTLPEETGLLPAELFAEAISQVAIAAGRDDTLPMLTGIRVEILGETVVLAATDRFRLAVRELKWSASSPDIEAAVLVPAKTLAEAAKAGIGGSDVRLSLGTGPGVGKDGLLGISGNGKRSTTRLLDAEFPKFRQLLPTEHTAVATMDVAELIEAIKLVALVADRGAQVRMEFADGSVRLSAGADDVGRAEEDLVVDYAGEPLTIAFNPTYLTDGLSSLRSERVSFGFTTAGKPALLRPVSGDDRPVAGLNGNGPFPAVSTDYVYLLMPVRLPG.

It belongs to the beta sliding clamp family. As to quaternary structure, forms a ring-shaped head-to-tail homodimer around DNA which binds and tethers DNA polymerases and other proteins to the DNA. The DNA replisome complex has a single clamp-loading complex (3 tau and 1 each of delta, delta', psi and chi subunits) which binds 3 Pol III cores (1 core on the leading strand and 2 on the lagging strand) each with a beta sliding clamp dimer. Additional proteins in the replisome are other copies of gamma, psi and chi, Ssb, DNA helicase and RNA primase.

The protein localises to the cytoplasm. Functionally, confers DNA tethering and processivity to DNA polymerases and other proteins. Acts as a clamp, forming a ring around DNA (a reaction catalyzed by the clamp-loading complex) which diffuses in an ATP-independent manner freely and bidirectionally along dsDNA. Initially characterized for its ability to contact the catalytic subunit of DNA polymerase III (Pol III), a complex, multichain enzyme responsible for most of the replicative synthesis in bacteria; Pol III exhibits 3'-5' exonuclease proofreading activity. The beta chain is required for initiation of replication as well as for processivity of DNA replication. This is Beta sliding clamp (dnaN) from Mycobacterium bovis (strain ATCC BAA-935 / AF2122/97).